We begin with the raw amino-acid sequence, 415 residues long: Serine hydroxymethyltransferase (415 aa).

(6S)-5,6,7,8-tetrahydrofolate is bound by residues Leu117 and 121-123 (GHL). An N6-(pyridoxal phosphate)lysine modification is found at Lys226.

Belongs to the SHMT family. Homodimer. Pyridoxal 5'-phosphate is required as a cofactor.

It localises to the cytoplasm. The catalysed reaction is (6R)-5,10-methylene-5,6,7,8-tetrahydrofolate + glycine + H2O = (6S)-5,6,7,8-tetrahydrofolate + L-serine. It participates in one-carbon metabolism; tetrahydrofolate interconversion. Its pathway is amino-acid biosynthesis; glycine biosynthesis; glycine from L-serine: step 1/1. In terms of biological role, catalyzes the reversible interconversion of serine and glycine with tetrahydrofolate (THF) serving as the one-carbon carrier. This reaction serves as the major source of one-carbon groups required for the biosynthesis of purines, thymidylate, methionine, and other important biomolecules. Also exhibits THF-independent aldolase activity toward beta-hydroxyamino acids, producing glycine and aldehydes, via a retro-aldol mechanism. This chain is Serine hydroxymethyltransferase, found in Leptospira borgpetersenii serovar Hardjo-bovis (strain JB197).